Here is a 291-residue protein sequence, read N- to C-terminus: Dihydroorotate dehydrogenase B (NAD(+)), catalytic subunit (291 aa).

FMN-binding positions include S17 and 42–43; that span reads KT. Substrate is bound by residues K42, 67–71, and N118; that span reads NAIGL. N118 serves as a coordination point for FMN. The active-site Nucleophile is the S121. Positions 153 and 178 each coordinate FMN. Position 179–180 (179–180) interacts with substrate; the sequence is NT. Residues G204, 230-231, and 252-253 contribute to the FMN site; these read GG and GT.

It belongs to the dihydroorotate dehydrogenase family. Type 1 subfamily. As to quaternary structure, heterotetramer of 2 PyrK and 2 PyrD type B subunits. It depends on FMN as a cofactor.

The protein localises to the cytoplasm. The enzyme catalyses (S)-dihydroorotate + NAD(+) = orotate + NADH + H(+). It participates in pyrimidine metabolism; UMP biosynthesis via de novo pathway; orotate from (S)-dihydroorotate (NAD(+) route): step 1/1. Catalyzes the conversion of dihydroorotate to orotate with NAD(+) as electron acceptor. This chain is Dihydroorotate dehydrogenase B (NAD(+)), catalytic subunit (pyrD), found in Sulfolobus acidocaldarius (strain ATCC 33909 / DSM 639 / JCM 8929 / NBRC 15157 / NCIMB 11770).